Reading from the N-terminus, the 438-residue chain is Protein DAY-LENGTH-DEPENDENT DELAYED-GREENING 1, chloroplastic (438 aa).

The transit peptide at 1 to 54 directs the protein to the chloroplast; that stretch reads MSLMSSSMVLCHCLSFSSQNPDPESSSSSLLRYKPCDSISLWGKRRKKLWRFVP. 4 helical membrane-spanning segments follow: residues 216-236, 314-334, 359-379, and 398-418; these read FLAV…DYLL, AFAN…LLYA, AFLI…SGWE, and ITIF…LWLF.

It belongs to the CemA family.

The protein localises to the plastid. Its subcellular location is the chloroplast envelope. The protein resides in the chloroplast membrane. The catalysed reaction is K(+)(in) + H(+)(out) = K(+)(out) + H(+)(in). It carries out the reaction Ca(2+)(in) + H(+)(out) = Ca(2+)(out) + H(+)(in). In terms of biological role, promotes K(+)/H(+) antiport activity supporting K(+) efflux to control H(+) homeostasis in chloroplasts. Also able to ensure Ca(2+)/H(+) antiport activity in vitro. Essential for chloroplast pH regulation and optimization of non-photochemical quenching (NPQ), a regulatory mechanism that dissipates excess light energy; acts downstream of PSBS but independently from PGR5 and FLAP1. The chain is Protein DAY-LENGTH-DEPENDENT DELAYED-GREENING 1, chloroplastic from Arabidopsis thaliana (Mouse-ear cress).